Consider the following 1259-residue polypeptide: Lysine-specific demethylase 2B (1259 aa).

Positions 147–315 (FSHTKLERVV…MQLRVFEIED (169 aa)) constitute a JmjC domain. Position 208 (Thr208) interacts with substrate. 2 residues coordinate Fe cation: His211 and Asp213. A substrate-binding site is contributed by Lys228. Position 283 (His283) interacts with Fe cation. Residues 388-402 (EEKGNLVEKPSKQSG) are compositionally biased toward basic and acidic residues. Disordered stretches follow at residues 388–463 (EEKG…ATDM) and 536–562 (KPSK…SANR). Positions 403–413 (DESSTTNSTHS) are enriched in polar residues. Positions 414-423 (NGKDAAEKKQ) are enriched in basic and acidic residues. Residues 426-437 (TLMQQLKRTLSN) show a composition bias toward polar residues. Positions 536–548 (KPSKNRAVGRPKG) are enriched in basic residues. The CXXC-type zinc-finger motif lies at 567-613 (ARRRRTRCRKCEACLRTECGECHFCKDMKKFGGPGRMKQSCIMRQCI). Zn(2+) is bound by residues Cys574, Cys577, Cys580, Cys585, Cys588, Cys591, Cys607, Cys612, Cys623, Cys626, Cys649, Cys652, His657, Cys660, Cys680, and Cys683. The PHD-type zinc-finger motif lies at 620-686 (TAVCLVCGEA…CWECPKCNHA (67 aa)). 2 stretches are compositionally biased toward basic and acidic residues: residues 729 to 763 (KKKV…EDGH) and 771 to 790 (EKPP…EEKL). Positions 729–958 (KKKVEREETP…PPPSLSPPKC (230 aa)) are disordered. The span at 835-848 (SRSSSPTAGPSTEG) shows a compositional bias: polar residues. Over residues 854–863 (KKKIRRKRRV) the composition is skewed to basic residues. The segment covering 864 to 877 (SNKELSKELSKELN) has biased composition (basic and acidic residues). Residues 864 to 891 (SNKELSKELSKELNQEIQKTESSLASEN) adopt a coiled-coil conformation. Positions 878 to 889 (QEIQKTESSLAS) are enriched in polar residues. Positions 890-908 (ENHHPIKSEPESDNEESKK) are enriched in basic and acidic residues. One can recognise an F-box domain in the interval 985 to 1030 (AHVMQREVWMAIFSYLSHRDLCICMRICRTWNRWCCDKRLWTQIDL). LRR repeat units lie at residues 1056-1081 (WTNI…NLSG), 1082-1105 (CSWI…NVQW), 1145-1170 (GLDI…DLSY), 1171-1200 (CNHV…NLSD), and 1201-1225 (CNNV…DLRF).

This sequence belongs to the JHDM1 histone demethylase family. The cofactor is Fe(2+).

Its subcellular location is the nucleus. It localises to the nucleolus. It is found in the chromosome. It catalyses the reaction N(6),N(6)-dimethyl-L-lysyl(36)-[histone H3] + 2 2-oxoglutarate + 2 O2 = L-lysyl(36)-[histone H3] + 2 formaldehyde + 2 succinate + 2 CO2. With respect to regulation, histone demethylase activity is inhibited by fumarate. Histone demethylase that demethylates 'Lys-4' and 'Lys-36' of histone H3, thereby playing a central role in histone code. Preferentially demethylates trimethylated H3 'Lys-4' and dimethylated H3 'Lys-36' residue while it has weak or no activity for mono- and tri-methylated H3 'Lys-36'. Preferentially binds the transcribed region of ribosomal RNA and represses the transcription of ribosomal RNA genes which inhibits cell growth and proliferation. The sequence is that of Lysine-specific demethylase 2B (kdm2b) from Xenopus laevis (African clawed frog).